The sequence spans 187 residues: Peptide deformylase 2 (187 aa).

Cys107 and His149 together coordinate Fe cation. The active site involves Glu150. His153 is a Fe cation binding site.

The protein belongs to the polypeptide deformylase family. Fe(2+) is required as a cofactor.

The enzyme catalyses N-terminal N-formyl-L-methionyl-[peptide] + H2O = N-terminal L-methionyl-[peptide] + formate. Removes the formyl group from the N-terminal Met of newly synthesized proteins. Requires at least a dipeptide for an efficient rate of reaction. N-terminal L-methionine is a prerequisite for activity but the enzyme has broad specificity at other positions. The sequence is that of Peptide deformylase 2 from Gloeobacter violaceus (strain ATCC 29082 / PCC 7421).